A 473-amino-acid polypeptide reads, in one-letter code: Photosystem II CP43 reaction center protein (473 aa).

Residues 1–14 (MKTLYSLRRFYHVE) constitute a propeptide that is removed on maturation. Thr15 carries the post-translational modification N-acetylthreonine. The residue at position 15 (Thr15) is a Phosphothreonine. A run of 5 helical transmembrane segments spans residues 69–93 (LFEV…PHLA), 134–155 (LIGP…KDKN), 178–200 (KACY…RIIT), 255–275 (KPWA…LSYS), and 291–312 (WFNN…ASQA). A [CaMn4O5] cluster-binding site is contributed by Glu367. A helical membrane pass occupies residues 447-471 (RARAAAAGFEKGIERETEPVLFMKP).

This sequence belongs to the PsbB/PsbC family. PsbC subfamily. In terms of assembly, PSII is composed of 1 copy each of membrane proteins PsbA, PsbB, PsbC, PsbD, PsbE, PsbF, PsbH, PsbI, PsbJ, PsbK, PsbL, PsbM, PsbT, PsbX, PsbY, PsbZ, Psb30/Ycf12, at least 3 peripheral proteins of the oxygen-evolving complex and a large number of cofactors. It forms dimeric complexes. Binds multiple chlorophylls and provides some of the ligands for the Ca-4Mn-5O cluster of the oxygen-evolving complex. It may also provide a ligand for a Cl- that is required for oxygen evolution. PSII binds additional chlorophylls, carotenoids and specific lipids. serves as cofactor.

It is found in the plastid. It localises to the chloroplast thylakoid membrane. Its function is as follows. One of the components of the core complex of photosystem II (PSII). It binds chlorophyll and helps catalyze the primary light-induced photochemical processes of PSII. PSII is a light-driven water:plastoquinone oxidoreductase, using light energy to abstract electrons from H(2)O, generating O(2) and a proton gradient subsequently used for ATP formation. This Mesostigma viride (Green alga) protein is Photosystem II CP43 reaction center protein.